The primary structure comprises 610 residues: Isocitrate dehydrogenase kinase/phosphatase (610 aa).

Residues 359 to 365 and Lys380 each bind ATP; that span reads APGFKGT. The active site involves Asp419.

The protein belongs to the AceK family.

The protein localises to the cytoplasm. The catalysed reaction is L-seryl-[isocitrate dehydrogenase] + ATP = O-phospho-L-seryl-[isocitrate dehydrogenase] + ADP + H(+). Its function is as follows. Bifunctional enzyme which can phosphorylate or dephosphorylate isocitrate dehydrogenase (IDH) on a specific serine residue. This is a regulatory mechanism which enables bacteria to bypass the Krebs cycle via the glyoxylate shunt in response to the source of carbon. When bacteria are grown on glucose, IDH is fully active and unphosphorylated, but when grown on acetate or ethanol, the activity of IDH declines drastically concomitant with its phosphorylation. The sequence is that of Isocitrate dehydrogenase kinase/phosphatase from Rhodopseudomonas palustris (strain ATCC BAA-98 / CGA009).